The following is a 220-amino-acid chain: UPF0319 protein YccT (220 aa).

Positions M1–A20 are cleaved as a signal peptide.

This sequence belongs to the UPF0319 family.

The sequence is that of UPF0319 protein YccT from Salmonella schwarzengrund (strain CVM19633).